Here is a 119-residue protein sequence, read N- to C-terminus: MQAKAILRHTPTSPRKMRLVAGLVRGKQVDLAKAILLNSTKSASRNVMMTLKSAVSNYALINPDERVSDQELFIKAVYVDQGATLKRTLPAPMGRAFRIRKRSNHLTIIVDKVKNPVTK.

Belongs to the universal ribosomal protein uL22 family. As to quaternary structure, part of the 50S ribosomal subunit.

Its function is as follows. This protein binds specifically to 23S rRNA; its binding is stimulated by other ribosomal proteins, e.g. L4, L17, and L20. It is important during the early stages of 50S assembly. It makes multiple contacts with different domains of the 23S rRNA in the assembled 50S subunit and ribosome. In terms of biological role, the globular domain of the protein is located near the polypeptide exit tunnel on the outside of the subunit, while an extended beta-hairpin is found that lines the wall of the exit tunnel in the center of the 70S ribosome. The protein is Large ribosomal subunit protein uL22 of Chlorobium phaeobacteroides (strain DSM 266 / SMG 266 / 2430).